The chain runs to 159 residues: NAD(P)H-quinone oxidoreductase subunit J, chloroplastic (159 aa).

The protein belongs to the complex I 30 kDa subunit family. As to quaternary structure, NDH is composed of at least 16 different subunits, 5 of which are encoded in the nucleus.

The protein localises to the plastid. It localises to the chloroplast thylakoid membrane. The enzyme catalyses a plastoquinone + NADH + (n+1) H(+)(in) = a plastoquinol + NAD(+) + n H(+)(out). It catalyses the reaction a plastoquinone + NADPH + (n+1) H(+)(in) = a plastoquinol + NADP(+) + n H(+)(out). NDH shuttles electrons from NAD(P)H:plastoquinone, via FMN and iron-sulfur (Fe-S) centers, to quinones in the photosynthetic chain and possibly in a chloroplast respiratory chain. The immediate electron acceptor for the enzyme in this species is believed to be plastoquinone. Couples the redox reaction to proton translocation, and thus conserves the redox energy in a proton gradient. The polypeptide is NAD(P)H-quinone oxidoreductase subunit J, chloroplastic (Oryza nivara (Indian wild rice)).